The primary structure comprises 271 residues: Small ribosomal subunit protein uS2 (271 aa).

This sequence belongs to the universal ribosomal protein uS2 family.

The sequence is that of Small ribosomal subunit protein uS2 from Wolbachia pipientis subsp. Culex pipiens (strain wPip).